A 664-amino-acid polypeptide reads, in one-letter code: Chaperone protein dnaK1 (664 aa).

A Phosphothreonine; by autocatalysis modification is found at T198.

The protein belongs to the heat shock protein 70 family.

Acts as a chaperone. This chain is Chaperone protein dnaK1 (dnaK1), found in Prochlorococcus marinus (strain MIT 9313).